Consider the following 394-residue polypeptide: Nuclear pore glycoprotein p62 (394 aa).

5 consecutive repeat copies span residues 22-23 (FG), 50-51 (FG), 75-76 (FG), 77-78 (FG), and 116-117 (FG). Positions 22 to 117 (FGLSTGTPAA…GTSAAPPAFG (96 aa)) are 5 X 2 AA repeats of F-G. Low complexity predominate over residues 45-57 (KTTFSFGTPAPTA). The disordered stretch occupies residues 45-73 (KTTFSFGTPAPTAGIGGGDADNSKAQAPP). Positions 211-341 (SYHQLEEHIN…DNLNEANKGQ (131 aa)) form a coiled coil.

Belongs to the nucleoporin NSP1/NUP62 family. In terms of tissue distribution, expressed in adult male accessory glands (at protein level).

Its subcellular location is the nucleus. The protein localises to the chromosome. It is found in the nucleus envelope. The protein resides in the nuclear pore complex. It localises to the cytoplasm. Its subcellular location is the cytoskeleton. The protein localises to the spindle pole. It is found in the microtubule organizing center. The protein resides in the centrosome. Essential component of the nuclear pore complex. The N-terminal is probably involved in nucleocytoplasmic transport. The C-terminal is involved in protein-protein interaction probably via coiled-coil formation, promotes its association with centrosomes and may function in anchorage of Nup62 to the pore complex. Binds to transcriptionally active genes. Negatively regulates chromatin attachment to the nuclear envelope, probably by preventing chromatin tethering by Nup154. The chain is Nuclear pore glycoprotein p62 from Drosophila melanogaster (Fruit fly).